The primary structure comprises 224 residues: UPF0758 protein CJA_3522 (224 aa).

Positions 102–224 constitute an MPN domain; it reads LLSSPHLVRD…LVSLAERGWL (123 aa). Histidine 173, histidine 175, and aspartate 186 together coordinate Zn(2+). Residues 173-186 carry the JAMM motif motif; the sequence is HNHPSGLAEPSQAD.

This sequence belongs to the UPF0758 family.

This Cellvibrio japonicus (strain Ueda107) (Pseudomonas fluorescens subsp. cellulosa) protein is UPF0758 protein CJA_3522.